Consider the following 396-residue polypeptide: Mannonate dehydratase (396 aa).

Belongs to the mannonate dehydratase family. Requires Fe(2+) as cofactor. Mn(2+) is required as a cofactor.

It carries out the reaction D-mannonate = 2-dehydro-3-deoxy-D-gluconate + H2O. The protein operates within carbohydrate metabolism; pentose and glucuronate interconversion. Its function is as follows. Catalyzes the dehydration of D-mannonate. This Enterobacter sp. (strain 638) protein is Mannonate dehydratase.